The following is a 66-amino-acid chain: MPKMKTHRGSAKRFKKTASGKLKRGHAYTSHLFANKTKKQKRHLRKATLVSPGDFKRIRQMLDNLK.

The segment covering 1-26 (MPKMKTHRGSAKRFKKTASGKLKRGH) has biased composition (basic residues). A disordered region spans residues 1–29 (MPKMKTHRGSAKRFKKTASGKLKRGHAYT).

It belongs to the bacterial ribosomal protein bL35 family.

This is Large ribosomal subunit protein bL35 from Geobacillus kaustophilus (strain HTA426).